A 588-amino-acid chain; its full sequence is Aspartate--tRNA ligase (588 aa).

Residue E174 coordinates L-aspartate. The interval 198 to 201 is aspartate; that stretch reads QLFK. Residue R220 coordinates L-aspartate. ATP-binding positions include 220–222 and Q229; that span reads RDE. L-aspartate is bound at residue H448. Residue E482 participates in ATP binding. R489 is an L-aspartate binding site. 534-537 provides a ligand contact to ATP; it reads GIDR.

This sequence belongs to the class-II aminoacyl-tRNA synthetase family. Type 1 subfamily. As to quaternary structure, homodimer.

The protein localises to the cytoplasm. It catalyses the reaction tRNA(Asp) + L-aspartate + ATP = L-aspartyl-tRNA(Asp) + AMP + diphosphate. Functionally, catalyzes the attachment of L-aspartate to tRNA(Asp) in a two-step reaction: L-aspartate is first activated by ATP to form Asp-AMP and then transferred to the acceptor end of tRNA(Asp). The sequence is that of Aspartate--tRNA ligase from Xanthomonas campestris pv. campestris (strain 8004).